Reading from the N-terminus, the 149-residue chain is Myoglobin (149 aa).

Ala2 is modified (N-acetylalanine). Positions 2-143 (ADWDKVNSVW…ICSDIEKEYK (142 aa)) constitute a Globin domain. Position 89 (His89) interacts with heme b.

Belongs to the globin family. Monomeric.

It localises to the cytoplasm. Its subcellular location is the sarcoplasm. It carries out the reaction Fe(III)-heme b-[protein] + nitric oxide + H2O = Fe(II)-heme b-[protein] + nitrite + 2 H(+). It catalyses the reaction H2O2 + AH2 = A + 2 H2O. Its function is as follows. Monomeric heme protein which primary function is to store oxygen and facilitate its diffusion within muscle tissues. Reversibly binds oxygen through a pentacoordinated heme iron and enables its timely and efficient release as needed during periods of heightened demand. Depending on the oxidative conditions of tissues and cells, and in addition to its ability to bind oxygen, it also has a nitrite reductase activity whereby it regulates the production of bioactive nitric oxide. Under stress conditions, like hypoxia and anoxia, it also protects cells against reactive oxygen species thanks to its pseudoperoxidase activity. In Galeorhinus galeus (Tope shark), this protein is Myoglobin (mb).